Reading from the N-terminus, the 162-residue chain is Phosphopantetheine adenylyltransferase (162 aa).

Substrate is bound at residue Ser11. ATP contacts are provided by residues 11–12 (SF) and His19. Substrate contacts are provided by Lys43, Leu75, and Arg89. ATP is bound by residues 90–92 (GLR), Glu100, and 125–131 (FSYISSS).

This sequence belongs to the bacterial CoaD family. In terms of assembly, homohexamer. Requires Mg(2+) as cofactor.

The protein localises to the cytoplasm. The enzyme catalyses (R)-4'-phosphopantetheine + ATP + H(+) = 3'-dephospho-CoA + diphosphate. It functions in the pathway cofactor biosynthesis; coenzyme A biosynthesis; CoA from (R)-pantothenate: step 4/5. In terms of biological role, reversibly transfers an adenylyl group from ATP to 4'-phosphopantetheine, yielding dephospho-CoA (dPCoA) and pyrophosphate. This chain is Phosphopantetheine adenylyltransferase, found in Petrotoga mobilis (strain DSM 10674 / SJ95).